The sequence spans 269 residues: MASANTRRVGDGAGGAFQPYLDSLRQELQQRDPTLLSVAVALLAVLLTLVFWKFIWSRKSSQRAVLFVGLCDSGKTLLFVRLLTGQYRDTQTSITDSSAIYKVNNNRGNSLTLIDLPGHESLRFQLLDRFKSSARAVVFVVDSAAFQREVKDVAEFLYQVLIDSMALKNSPSLLIACNKQDIAMAKSAKLIQQQLEKELNTLRVTRSAAPSTLDSSSTAPAQLGKKGKEFEFSQLPLKVEFLECSAKGGRGDTGSADIQDLEKWLAKIA.

A helical membrane pass occupies residues 35–55 (LLSVAVALLAVLLTLVFWKFI). Residues 69–77 (GLCDSGKTL) and 90–93 (TQTS) contribute to the GTP site. Residue S110 is modified to Phosphoserine. GTP is bound by residues G118 and 178–181 (NKQD). Position 212 is a phosphothreonine (T212). A GTP-binding site is contributed by A246.

Belongs to the SRP receptor beta subunit family. Heterodimer with SRPRA.

Its subcellular location is the endoplasmic reticulum membrane. In terms of biological role, component of the SRP (signal recognition particle) receptor. Ensures, in conjunction with the signal recognition particle, the correct targeting of the nascent secretory proteins to the endoplasmic reticulum membrane system. May mediate the membrane association of SR. This is Signal recognition particle receptor subunit beta (Srprb) from Mus musculus (Mouse).